Here is a 38-residue protein sequence, read N- to C-terminus: Small toxic protein BsrG (38 aa).

Residues 11–31 (INFGGLILNTVLLIFNIMMIV) traverse the membrane as a helical segment.

The protein resides in the cell membrane. Toxic component of a type I toxin-antitoxin (TA) system; expression in the absence of cognate antisense antitoxin SR4 RNA leads to cell lysis. Induced expression causes membrane invaginations that dislocate the cell wall synthesis machinery, leading to eventual death. Unlike many type I TA systems it does not form pores. Base pairing occurs between the 3' UTRs of bsrG mRNA and SR4 RNA, which leads to initiation of degradation by RNase III (rnc) followed by the action of RNase Y (rny) and RNase R (rnr). Not toxic when expressed in E.coli. When induced during logarithmic growth it only slowly exerts its toxic effect. Expression during log growth leads to significant disturbances of cell envelope biosynthesis and cell morphology, causing cell membrane invaginations and delocalization of cell division and cell wall synthesis machinery. Cell lysis depends on mreB, lytC and lytD, suggesting expression of bsrG triggers autolysis rather than disintegration of the membrane. Additionally expression of bsrG also inhibits transcription. This is Small toxic protein BsrG from Bacillus subtilis (strain 168).